The following is a 285-amino-acid chain: Bifunctional protein FolD (285 aa).

Residues 165–167 (GRS) and serine 190 contribute to the NADP(+) site.

Belongs to the tetrahydrofolate dehydrogenase/cyclohydrolase family. Homodimer.

The catalysed reaction is (6R)-5,10-methylene-5,6,7,8-tetrahydrofolate + NADP(+) = (6R)-5,10-methenyltetrahydrofolate + NADPH. The enzyme catalyses (6R)-5,10-methenyltetrahydrofolate + H2O = (6R)-10-formyltetrahydrofolate + H(+). It functions in the pathway one-carbon metabolism; tetrahydrofolate interconversion. Catalyzes the oxidation of 5,10-methylenetetrahydrofolate to 5,10-methenyltetrahydrofolate and then the hydrolysis of 5,10-methenyltetrahydrofolate to 10-formyltetrahydrofolate. The chain is Bifunctional protein FolD from Burkholderia orbicola (strain AU 1054).